Consider the following 285-residue polypeptide: Acetyl-coenzyme A carboxylase carboxyl transferase subunit beta (285 aa).

Residues 29–285 (IMTKCPKCKK…ILKIHQEVTK (257 aa)) enclose the CoA carboxyltransferase N-terminal domain. The Zn(2+) site is built by Cys33, Cys36, Cys52, and Cys55. Residues 33-55 (CPKCKKIMYTKELAENLNVCFNC) form a C4-type zinc finger.

This sequence belongs to the AccD/PCCB family. In terms of assembly, acetyl-CoA carboxylase is a heterohexamer composed of biotin carboxyl carrier protein (AccB), biotin carboxylase (AccC) and two subunits each of ACCase subunit alpha (AccA) and ACCase subunit beta (AccD). Requires Zn(2+) as cofactor.

The protein localises to the cytoplasm. It catalyses the reaction N(6)-carboxybiotinyl-L-lysyl-[protein] + acetyl-CoA = N(6)-biotinyl-L-lysyl-[protein] + malonyl-CoA. It functions in the pathway lipid metabolism; malonyl-CoA biosynthesis; malonyl-CoA from acetyl-CoA: step 1/1. Functionally, component of the acetyl coenzyme A carboxylase (ACC) complex. Biotin carboxylase (BC) catalyzes the carboxylation of biotin on its carrier protein (BCCP) and then the CO(2) group is transferred by the transcarboxylase to acetyl-CoA to form malonyl-CoA. This Staphylococcus aureus (strain Newman) protein is Acetyl-coenzyme A carboxylase carboxyl transferase subunit beta.